Here is a 27-residue protein sequence, read N- to C-terminus: AnmTX Sco 9a-1 (27 aa).

Residue P6 is modified to Hydroxyproline. 2 cysteine pairs are disulfide-bonded: C7–C18 and C10–C25.

Its function is as follows. Has analgesic and anti-inflammatory activity in vivo. At a dose of 0.1 and 1 mg/kg, exhibits anti-inflammatory activity by reducing the volume of edema during 24 h better than the nonsteroidal anti-inflammatory drug, Diclofenac, at dose of 1 mg/kg in a mouse model of acute local lambda-carrageenan-induced inflammation. At a dose of 1 mg/kg, reduces the content of tumor necrosis factor-alpha (TNF-alpha). Demonstrates a significant analgesic effect on acute pain sensitivity in the carrageenan-induced thermal hyperalgesia model at doses of 0.1 and 1 mg/kg. Not toxic in mice, however stimulates exploratory motivation and active search behavior, and demonstrates an anti-anxiety effect. Does not exhibit any effect on currents of rat acid-sensing ion channels ASIC1a or ASIC3. The chain is AnmTX Sco 9a-1 from Stomphia coccinea (Spotted swimming anemone).